The following is a 344-amino-acid chain: Lipase chaperone (344 aa).

A helical transmembrane segment spans residues 14–34 (AAIYGVVGLAAIAGVAMWSGA).

Belongs to the lipase chaperone family.

The protein localises to the cell inner membrane. Its function is as follows. May be involved in the folding of the extracellular lipase during its passage through the periplasm. This is Lipase chaperone from Burkholderia cenocepacia (strain HI2424).